A 452-amino-acid polypeptide reads, in one-letter code: MKNIHAIILAAGKGSRMNSSKPKVLQTLSNNTLLGHILSQVKGLCDKVHVVYGFEGNQVQRKINDSNINWVEQTEQLGTGHAVAQAMPHIEDNSISLILYGDVPLIKKSTLADLIHKAQQSGLSLLSVILDNPTGYGRIIRKDKQIQAIVEQKDATNTQLNINEVNTGIMAVHSQLLKQYLSKINSSNAQGELYLTDIIACAITDGQIVSSIISKNKFEIAGVNDKVQLAELERIFQINQATQFMQQGLSLKDPNRFDCRGVFTFGKDCEIDINALIEGEVVLGDNTIIAPNCIIKNSKIGNCISILSNCVIEDCVIEDGATIGPFARIRPNTHIKTYAKIGNFVEVKKSIIGENTNVSHLSYIGDAIIGKNVNISAGVITCNYDGINKHQTIIGDGAFIGSDSQLVAPIKIGKNATIGAGSTITKAAPDNQLSLSRTKQISLKNWQRPTKK.

The pyrophosphorylase stretch occupies residues 1–226 (MKNIHAIILA…KFEIAGVNDK (226 aa)). UDP-N-acetyl-alpha-D-glucosamine-binding positions include 9–12 (LAAG), Lys-23, Gln-73, 78–79 (GT), 100–102 (YGD), Gly-137, Glu-151, Asn-166, and Asn-224. Position 102 (Asp-102) interacts with Mg(2+). Asn-224 contributes to the Mg(2+) binding site. The interval 227 to 247 (VQLAELERIFQINQATQFMQQ) is linker. The interval 248–452 (GLSLKDPNRF…LKNWQRPTKK (205 aa)) is N-acetyltransferase. Positions 330 and 348 each coordinate UDP-N-acetyl-alpha-D-glucosamine. His-360 functions as the Proton acceptor in the catalytic mechanism. Residues Tyr-363 and Asn-374 each contribute to the UDP-N-acetyl-alpha-D-glucosamine site. Acetyl-CoA is bound by residues Ala-377, 383–384 (NY), Ser-402, Ala-420, and Arg-437.

The protein in the N-terminal section; belongs to the N-acetylglucosamine-1-phosphate uridyltransferase family. It in the C-terminal section; belongs to the transferase hexapeptide repeat family. In terms of assembly, homotrimer. Mg(2+) serves as cofactor.

Its subcellular location is the cytoplasm. It catalyses the reaction alpha-D-glucosamine 1-phosphate + acetyl-CoA = N-acetyl-alpha-D-glucosamine 1-phosphate + CoA + H(+). It carries out the reaction N-acetyl-alpha-D-glucosamine 1-phosphate + UTP + H(+) = UDP-N-acetyl-alpha-D-glucosamine + diphosphate. The protein operates within nucleotide-sugar biosynthesis; UDP-N-acetyl-alpha-D-glucosamine biosynthesis; N-acetyl-alpha-D-glucosamine 1-phosphate from alpha-D-glucosamine 6-phosphate (route II): step 2/2. Its pathway is nucleotide-sugar biosynthesis; UDP-N-acetyl-alpha-D-glucosamine biosynthesis; UDP-N-acetyl-alpha-D-glucosamine from N-acetyl-alpha-D-glucosamine 1-phosphate: step 1/1. It participates in bacterial outer membrane biogenesis; LPS lipid A biosynthesis. Its function is as follows. Catalyzes the last two sequential reactions in the de novo biosynthetic pathway for UDP-N-acetylglucosamine (UDP-GlcNAc). The C-terminal domain catalyzes the transfer of acetyl group from acetyl coenzyme A to glucosamine-1-phosphate (GlcN-1-P) to produce N-acetylglucosamine-1-phosphate (GlcNAc-1-P), which is converted into UDP-GlcNAc by the transfer of uridine 5-monophosphate (from uridine 5-triphosphate), a reaction catalyzed by the N-terminal domain. This chain is Bifunctional protein GlmU, found in Ruthia magnifica subsp. Calyptogena magnifica.